The primary structure comprises 395 residues: RNA polymerase II elongation factor ELL3 (395 aa).

Disordered regions lie at residues Ser-124–Glu-149, Val-163–His-182, Leu-194–Ala-218, and Leu-233–Pro-279. Residues Asn-130 to Ser-140 are compositionally biased toward basic and acidic residues. A compositionally biased stretch (polar residues) spans Ala-168–Gly-177. Positions Leu-246 to Glu-258 are enriched in acidic residues. The segment covering Pro-268–Leu-277 has biased composition (polar residues). The 111-residue stretch at Pro-283–Arg-393 folds into the OCEL domain.

Belongs to the ELL/occludin family. In terms of assembly, interacts with AFF4. Component of the super elongation complex (SEC), at least composed of EAF1, EAF2, CDK9, MLLT3/AF9, AFF (AFF1 or AFF4), the P-TEFb complex and ELL (ELL, ELL2 or ELL3). Component of the little elongation complex (LEC), at least composed of ELL (ELL, ELL2 or ELL3), ZC3H8, ICE1 and ICE2.

It is found in the nucleus. Enhancer-binding elongation factor that specifically binds enhancers in embryonic stem cells (ES cells), marks them, and is required for their future activation during stem cell specification. Elongation factor component of the super elongation complex (SEC), a complex required to increase the catalytic rate of RNA polymerase II transcription by suppressing transient pausing by the polymerase at multiple sites along the DNA. Component of the little elongation complex (LEC), a complex required to regulate small nuclear RNA (snRNA) gene transcription by RNA polymerase II and III. Does not only bind to enhancer regions of active genes, but also marks the enhancers that are in a poised or inactive state in ES cells and is required for establishing proper RNA polymerase II occupancy at developmentally regulated genes in a cohesin-dependent manner. Probably required for priming developmentally regulated genes for later recruitment of the super elongation complex (SEC), for transcriptional activation during differentiation. Required for recruitment of P-TEFb within SEC during differentiation. Probably preloaded on germ cell chromatin, suggesting that it may prime gene activation by marking enhancers as early as in the germ cells. Promoting epithelial-mesenchymal transition (EMT). In Bos taurus (Bovine), this protein is RNA polymerase II elongation factor ELL3 (ELL3).